A 541-amino-acid polypeptide reads, in one-letter code: MSAKDVKFGDSARSKMIAGVNVLADAVKVTLGPKGRNVVIDRSFGAPHITKDGVTVAKEISLKDKFENMGAQLVREVSSKTNDIAGDGTTTATVLAQAILNEGIKSVTAGMNPMDLKRGIDIAVKTVVENIRSIAKPADDFKAIEQVGSISANSDTTVGKLIAQAMEKVGKEGVITVEEGSGFEDALDVVEGMQFDRGYISPYFANKQDTLTAELENPFILLVDKKISNIRELISVLEAVAKTGKPLLIIAEDVEGEALATLVVNNMRGIIKVCAVKAPGFGDRRKAMLQDIAILTGATVISEEVGMSLEQATLQDLGTAHKITVSKENTVIVDGAGDAAAIAERVQQIRAQIEESTSEYDREKLQERVAKLAGGVAVIKIGAATEVEMKEKKDRVDDALHATRAAVEEGVVAGGGVALVRAVNALEGLKGANEDQTAGINILRRAIEAPLRQIVANAGDEPSVVINAVKNGEGNFGYNAATGEYGDMLEMGILDPAKVTRSALEHAASVAGLMLTTECMITDIPEDKPAAPDMGGMGGMM.

Residues 30 to 33 (TLGP), K51, 87 to 91 (DGTTT), G415, 479 to 481 (NAA), and D495 contribute to the ATP site.

Belongs to the chaperonin (HSP60) family. In terms of assembly, forms a cylinder of 14 subunits composed of two heptameric rings stacked back-to-back. Interacts with the co-chaperonin GroES.

It is found in the cytoplasm. It catalyses the reaction ATP + H2O + a folded polypeptide = ADP + phosphate + an unfolded polypeptide.. In terms of biological role, together with its co-chaperonin GroES, plays an essential role in assisting protein folding. The GroEL-GroES system forms a nano-cage that allows encapsulation of the non-native substrate proteins and provides a physical environment optimized to promote and accelerate protein folding. The chain is Chaperonin GroEL from Acinetobacter baumannii (strain SDF).